The following is a 481-amino-acid chain: Cardiolipin synthase A (481 aa).

2 helical membrane-spanning segments follow: residues 10–30 (FFGY…LHAL) and 40–60 (IAWA…YLIF). PLD phosphodiesterase domains are found at residues 220–247 (VNFR…GDEY) and 394–421 (QPGF…DNRS). Active-site residues include His225, Lys227, Asp232, His399, Lys401, and Asp406.

It belongs to the phospholipase D family. Cardiolipin synthase subfamily. ClsA sub-subfamily.

The protein localises to the cell inner membrane. It carries out the reaction 2 a 1,2-diacyl-sn-glycero-3-phospho-(1'-sn-glycerol) = a cardiolipin + glycerol. Catalyzes the reversible phosphatidyl group transfer from one phosphatidylglycerol molecule to another to form cardiolipin (CL) (diphosphatidylglycerol) and glycerol. The sequence is that of Cardiolipin synthase A from Pseudomonas putida (strain ATCC 47054 / DSM 6125 / CFBP 8728 / NCIMB 11950 / KT2440).